A 401-amino-acid polypeptide reads, in one-letter code: Chromate transport protein (401 aa).

A run of 12 helical transmembrane segments spans residues 26–46 (LVMYFLRLGTLGFGGPVALAG), 67–87 (GLALAQLAPGPLAAQLAIYLG), 93–113 (IVGATLVGVAFVLPSFLMVLA), 124–144 (LTWMQSVFYGVGAAVIGIIAI), 172–192 (VITESEVAWLFLAAGVLVWFW), 214–234 (AASGMMSTLDWPLLSQIGVFF), 237–257 (AGAFVFGSGLAIVPFLYGGVV), 272–294 (VAVAMITPGPVVITVGFIGYLVA), 299–321 (ACVAAAATFLPCYLFTVLPAPYF), 330–350 (ILAFVDGVTAAAIGAITGAVI), 356–376 (SIVDIPTALLALVTVALLLKF), and 379–399 (LSEPMIVAGAALIGLVAYPLL).

This sequence belongs to the chromate ion transporter (CHR) (TC 2.A.51) family.

It is found in the cell inner membrane. Functionally, this protein reduces chromate accumulation and is essential for chromate resistance. The protein is Chromate transport protein of Cupriavidus metallidurans (strain ATCC 43123 / DSM 2839 / NBRC 102507 / CH34) (Ralstonia metallidurans).